Here is a 162-residue protein sequence, read N- to C-terminus: Interleukin-15 (162 aa).

Positions Met1–Ala29 are cleaved as a signal peptide. Positions Gly30–Ala48 are excised as a propeptide. 2 disulfides stabilise this stretch: Cys83/Cys133 and Cys90/Cys136. Residue Asn127 is glycosylated (N-linked (GlcNAc...) asparagine).

Belongs to the IL-15/IL-21 family.

It is found in the secreted. Its function is as follows. Cytokine that plays a major role in the development of inflammatory and protective immune responses to microbial invaders and parasites by modulating immune cells of both the innate and adaptive immune systems. Stimulates the proliferation of natural killer cells, T-cells and B-cells and promotes the secretion of several cytokines. In monocytes, induces the production of IL8 and monocyte chemotactic protein 1/CCL2, two chemokines that attract neutrophils and monocytes respectively to sites of infection. Unlike most cytokines, which are secreted in soluble form, IL15 is expressed in association with its high affinity IL15RA on the surface of IL15-producing cells and delivers signals to target cells that express IL2RB and IL2RG receptor subunits. Binding to its receptor triggers the phosphorylation of JAK1 and JAK3 and the recruitment and subsequent phosphorylation of signal transducer and activator of transcription-3/STAT3 and STAT5. In mast cells, induces the rapid tyrosine phosphorylation of STAT6 and thereby controls mast cell survival and release of cytokines such as IL4. The protein is Interleukin-15 (IL15) of Chlorocebus aethiops (Green monkey).